The primary structure comprises 139 residues: Small ribosomal subunit protein uS11 (139 aa).

Disordered regions lie at residues 1–33 (MPPAKKGPATSARKGQKTRRREKKNVPHGAAHI) and 118–139 (GAISDVTPQPHNGVRPPKRRRV). The segment covering 14 to 23 (KGQKTRRREK) has biased composition (basic residues).

This sequence belongs to the universal ribosomal protein uS11 family. Part of the 30S ribosomal subunit. Interacts with proteins S7 and S18. Binds to IF-3.

Its function is as follows. Located on the platform of the 30S subunit, it bridges several disparate RNA helices of the 16S rRNA. Forms part of the Shine-Dalgarno cleft in the 70S ribosome. The sequence is that of Small ribosomal subunit protein uS11 from Mycobacterium tuberculosis (strain ATCC 25177 / H37Ra).